A 307-amino-acid polypeptide reads, in one-letter code: Small ribosomal subunit biogenesis GTPase RsgA (307 aa).

Positions 1-21 (MPSEHPFSDGISTPNPKETMN) are disordered. Residues 10–21 (GISTPNPKETMN) show a composition bias toward polar residues. One can recognise a CP-type G domain in the interval 85–242 (RQDAWKTKLI…LIDSPGLQEF (158 aa)). GTP is bound by residues 135 to 138 (NKAD) and 184 to 192 (GQSGMGKST). Zn(2+) contacts are provided by Cys-266, Cys-271, His-273, and Cys-279.

The protein belongs to the TRAFAC class YlqF/YawG GTPase family. RsgA subfamily. In terms of assembly, monomer. Associates with 30S ribosomal subunit, binds 16S rRNA. Zn(2+) is required as a cofactor.

Its subcellular location is the cytoplasm. In terms of biological role, one of several proteins that assist in the late maturation steps of the functional core of the 30S ribosomal subunit. Helps release RbfA from mature subunits. May play a role in the assembly of ribosomal proteins into the subunit. Circularly permuted GTPase that catalyzes slow GTP hydrolysis, GTPase activity is stimulated by the 30S ribosomal subunit. The sequence is that of Small ribosomal subunit biogenesis GTPase RsgA from Neisseria gonorrhoeae (strain NCCP11945).